A 167-amino-acid polypeptide reads, in one-letter code: Inclusion membrane protein G (167 aa).

2 helical membrane-spanning segments follow: residues 33–57 and 63–88; these read VVLA…AVLF and VLPY…LRSL. The segment at 94–167 is sufficient for interaction with human 14-3-3 beta protein; it reads SCKKRSPEEI…DNSRSRSRSF (74 aa). Positions 97–167 are disordered; it reads KRSPEEIEGA…DNSRSRSRSF (71 aa). Positions 122 to 135 are enriched in low complexity; it reads ESASPQASPTSSTL. Residues 161–166 carry the Phosphorylation-dependent binding motif motif; it reads RSRSRS. S166 carries the phosphoserine modification.

In terms of assembly, in infected HeLa cells colocalizes with host 14-3-3 protein (YWHAB); phosphorylation of Ser-166 is probably required. Interacts with Pkn1. In terms of processing, phosphorylated, possibly at more than one position, in infected HeLa cells. Phosphorylated by chlamydial kinase Pnk1.

The protein localises to the secreted. It localises to the host vacuole. It is found in the host pathogen-containing vacuole. Its subcellular location is the host pathogen-containing vacuole membrane. In terms of biological role, inclusion membrane protein probably involved in early modification events of the chlamydial inclusion. In Chlamydia trachomatis serovar L2 (strain ATCC VR-902B / DSM 19102 / 434/Bu), this protein is Inclusion membrane protein G.